The chain runs to 592 residues: MGEQLNGLKRTHMCGELTVEDVDKSVVVMGWVQRRRDHGGLVFIDLRDRTGIVQVVFSNEVSSEAFEKVQSVRSEYVLAIEGKVVKRAPENVNPKISTGEIEIYANTLKILSKSETPPFPIEDRSNVSEAIRLKYRYLDLRRPSMQQNLMTRFKITKVVRDFLNRNGFIEIETPLLIKSTPEGARDYLVPSRIYPGKFYALPQSPQIFKQLLMISGFDKYYQIAKCLRDEDLRADRQPEFTQIDIEMSFVEVEDVLKINEKMIAEIFKETLGIDVPIPFKRLSYQESMERFGTDKPDLRFGMELKDLSDIVAQSEFNVFKTALKNNGSVRGINVKGAASMPRRQLDELVEFAKTYGAKGLLWIQVFEKEVKSPATKFLSEEEMKKILERLEAEAGDLLLIVADKDEIVFDTLAHLRLELGKRFNLIDENKYEFVWIVDFPLLEYDEGEKRYVAKHHPFTAPKDEDIELLEKEPLKVRAKAYDIVLNGTEIGGGSIRIHDTELQKRMFKVLGFSEEKAWERFGFLMEAFKYGAPPHGGIAYGLDRLAMIITGSDTIRDVIAFPKTQNAVCLMTDAPSEVSEEQLKELHIKVDL.

An L-aspartate-binding site is contributed by E182. Residues 206–209 (QIFK) form an aspartate region. R228 contributes to the L-aspartate binding site. ATP is bound by residues 228–230 (RDE) and Q237. Position 455 (H455) interacts with L-aspartate. Position 489 (E489) interacts with ATP. R496 serves as a coordination point for L-aspartate. 541-544 (GLDR) contacts ATP.

It belongs to the class-II aminoacyl-tRNA synthetase family. Type 1 subfamily. As to quaternary structure, homodimer.

The protein localises to the cytoplasm. The enzyme catalyses tRNA(Asx) + L-aspartate + ATP = L-aspartyl-tRNA(Asx) + AMP + diphosphate. Functionally, aspartyl-tRNA synthetase with relaxed tRNA specificity since it is able to aspartylate not only its cognate tRNA(Asp) but also tRNA(Asn). Reaction proceeds in two steps: L-aspartate is first activated by ATP to form Asp-AMP and then transferred to the acceptor end of tRNA(Asp/Asn). This chain is Aspartate--tRNA(Asp/Asn) ligase, found in Thermoanaerobacter pseudethanolicus (strain ATCC 33223 / 39E) (Clostridium thermohydrosulfuricum).